A 264-amino-acid chain; its full sequence is Thymidylate synthase (264 aa).

Residue Arg21 coordinates dUMP. His51 contributes to the (6R)-5,10-methylene-5,6,7,8-tetrahydrofolate binding site. Arg126 to Arg127 contributes to the dUMP binding site. Cys146 (nucleophile) is an active-site residue. Residues Arg166–Asp169, Asn177, and His207–Tyr209 each bind dUMP. A (6R)-5,10-methylene-5,6,7,8-tetrahydrofolate-binding site is contributed by Asp169. Ala263 lines the (6R)-5,10-methylene-5,6,7,8-tetrahydrofolate pocket.

The protein belongs to the thymidylate synthase family. Bacterial-type ThyA subfamily. As to quaternary structure, homodimer.

The protein resides in the cytoplasm. The catalysed reaction is dUMP + (6R)-5,10-methylene-5,6,7,8-tetrahydrofolate = 7,8-dihydrofolate + dTMP. It participates in pyrimidine metabolism; dTTP biosynthesis. Catalyzes the reductive methylation of 2'-deoxyuridine-5'-monophosphate (dUMP) to 2'-deoxythymidine-5'-monophosphate (dTMP) while utilizing 5,10-methylenetetrahydrofolate (mTHF) as the methyl donor and reductant in the reaction, yielding dihydrofolate (DHF) as a by-product. This enzymatic reaction provides an intracellular de novo source of dTMP, an essential precursor for DNA biosynthesis. The polypeptide is Thymidylate synthase (Sinorhizobium medicae (strain WSM419) (Ensifer medicae)).